Consider the following 304-residue polypeptide: UDP-N-acetylenolpyruvoylglucosamine reductase (304 aa).

The FAD-binding PCMH-type domain maps to 33–198 (RVGGPADILV…IEATVELESG (166 aa)). Residue Arg-177 is part of the active site. Ser-227 functions as the Proton donor in the catalytic mechanism. The active site involves Glu-297.

It belongs to the MurB family. It depends on FAD as a cofactor.

The protein resides in the cytoplasm. The catalysed reaction is UDP-N-acetyl-alpha-D-muramate + NADP(+) = UDP-N-acetyl-3-O-(1-carboxyvinyl)-alpha-D-glucosamine + NADPH + H(+). It functions in the pathway cell wall biogenesis; peptidoglycan biosynthesis. Cell wall formation. This Clostridium perfringens (strain ATCC 13124 / DSM 756 / JCM 1290 / NCIMB 6125 / NCTC 8237 / Type A) protein is UDP-N-acetylenolpyruvoylglucosamine reductase.